A 103-amino-acid polypeptide reads, in one-letter code: Flagellar hook-basal body complex protein FliE (103 aa).

The protein belongs to the FliE family.

The protein resides in the bacterial flagellum basal body. The sequence is that of Flagellar hook-basal body complex protein FliE from Yersinia enterocolitica serotype O:8 / biotype 1B (strain NCTC 13174 / 8081).